We begin with the raw amino-acid sequence, 462 residues long: Neuronal acetylcholine receptor subunit non-alpha-2 (462 aa).

The first 30 residues, 1-30 (MTLAVIGLFTLFTSIIAITPAREFVSLAER), serve as a signal peptide directing secretion. Residues 31 to 234 (EDALLRELFQ…ITYSFILKRL (204 aa)) lie on the Extracellular side of the membrane. Asn53 and Asn168 each carry an N-linked (GlcNAc...) asparagine glycan. Cys155 and Cys169 are oxidised to a cystine. 3 consecutive transmembrane segments (helical) span residues 235-259 (PLFY…VFYL), 267-284 (VSLS…LLVI), and 301-322 (YLLF…VINV). The Cytoplasmic portion of the chain corresponds to 323–428 (HHRSSATYHP…WKFVAQVLDR (106 aa)). Positions 362–372 (ELEPHSPDLKP) are enriched in basic and acidic residues. Residues 362-384 (ELEPHSPDLKPRNKKGPPGPEGE) form a disordered region. Residues 429–446 (IFLWTFLTVSVLGTILIF) form a helical membrane-spanning segment.

It belongs to the ligand-gated ion channel (TC 1.A.9) family. Acetylcholine receptor (TC 1.A.9.1) subfamily. Neuronal AChR seems to be composed of two different type of subunits: alpha and beta.

The protein resides in the postsynaptic cell membrane. The protein localises to the cell membrane. Its function is as follows. After binding acetylcholine, the AChR responds by an extensive change in conformation that affects all subunits and leads to opening of an ion-conducting channel across the plasma membrane. The chain is Neuronal acetylcholine receptor subunit non-alpha-2 from Carassius auratus (Goldfish).